Consider the following 283-residue polypeptide: Phosphatidylserine decarboxylase proenzyme (283 aa).

Catalysis depends on charge relay system; for autoendoproteolytic cleavage activity residues Asp96, His152, and Ser250. Ser250 (schiff-base intermediate with substrate; via pyruvic acid; for decarboxylase activity) is an active-site residue. Pyruvic acid (Ser); by autocatalysis is present on Ser250.

It belongs to the phosphatidylserine decarboxylase family. PSD-B subfamily. Prokaryotic type I sub-subfamily. Heterodimer of a large membrane-associated beta subunit and a small pyruvoyl-containing alpha subunit. Pyruvate is required as a cofactor. In terms of processing, is synthesized initially as an inactive proenzyme. Formation of the active enzyme involves a self-maturation process in which the active site pyruvoyl group is generated from an internal serine residue via an autocatalytic post-translational modification. Two non-identical subunits are generated from the proenzyme in this reaction, and the pyruvate is formed at the N-terminus of the alpha chain, which is derived from the carboxyl end of the proenzyme. The autoendoproteolytic cleavage occurs by a canonical serine protease mechanism, in which the side chain hydroxyl group of the serine supplies its oxygen atom to form the C-terminus of the beta chain, while the remainder of the serine residue undergoes an oxidative deamination to produce ammonia and the pyruvoyl prosthetic group on the alpha chain. During this reaction, the Ser that is part of the protease active site of the proenzyme becomes the pyruvoyl prosthetic group, which constitutes an essential element of the active site of the mature decarboxylase.

The protein resides in the cell membrane. It carries out the reaction a 1,2-diacyl-sn-glycero-3-phospho-L-serine + H(+) = a 1,2-diacyl-sn-glycero-3-phosphoethanolamine + CO2. It functions in the pathway phospholipid metabolism; phosphatidylethanolamine biosynthesis; phosphatidylethanolamine from CDP-diacylglycerol: step 2/2. Functionally, catalyzes the formation of phosphatidylethanolamine (PtdEtn) from phosphatidylserine (PtdSer). The chain is Phosphatidylserine decarboxylase proenzyme from Acinetobacter baumannii (strain ATCC 17978 / DSM 105126 / CIP 53.77 / LMG 1025 / NCDC KC755 / 5377).